The primary structure comprises 134 residues: Small ribosomal subunit protein uS8c (134 aa).

The protein belongs to the universal ribosomal protein uS8 family. In terms of assembly, part of the 30S ribosomal subunit.

The protein localises to the plastid. It localises to the chloroplast. Functionally, one of the primary rRNA binding proteins, it binds directly to 16S rRNA central domain where it helps coordinate assembly of the platform of the 30S subunit. In Nicotiana tomentosiformis (Tobacco), this protein is Small ribosomal subunit protein uS8c (rps8).